The chain runs to 513 residues: Activin receptor type-2A (513 aa).

Residues 1–19 form the signal peptide; the sequence is MGAAAKLAFAVFLISCSSG. Over 20-135 the chain is Extracellular; it reads AILGRSETQE…TSNPVTPKPP (116 aa). Cystine bridges form between C30–C60, C50–C78, C85–C104, C91–C103, and C105–C110. N-linked (GlcNAc...) asparagine glycosylation is found at N43 and N66. A helical membrane pass occupies residues 136–161; the sequence is YYNILLYSLVPLMLIAGIVICAFWVY. Topologically, residues 162–513 are cytoplasmic; that stretch reads RHHMMAYPPV…VDFPPKESSL (352 aa). Positions 192–485 constitute a Protein kinase domain; sequence LQLLEVKARG…GERITQMQRL (294 aa). Residues 198 to 206 and K219 contribute to the ATP site; that span reads KARGRFGCV. D322 functions as the Proton acceptor in the catalytic mechanism.

It belongs to the protein kinase superfamily. TKL Ser/Thr protein kinase family. TGFB receptor subfamily. In terms of assembly, part of a complex consisting of MAGI2/ARIP1, ACVR2A, ACVR1B and SMAD3. Interacts with MAGI2/ARIP1. Interacts with type I receptor ACVR1. Interacts with BMP7. Interacts with TSC22D1/TSC-22. Interacts with activin A/INHBA. It depends on Mg(2+) as a cofactor. Mn(2+) is required as a cofactor.

It is found in the cell membrane. The enzyme catalyses L-threonyl-[receptor-protein] + ATP = O-phospho-L-threonyl-[receptor-protein] + ADP + H(+). It carries out the reaction L-seryl-[receptor-protein] + ATP = O-phospho-L-seryl-[receptor-protein] + ADP + H(+). Functionally, on ligand binding, forms a receptor complex consisting of two type II and two type I transmembrane serine/threonine kinases. Type II receptors phosphorylate and activate type I receptors which autophosphorylate, then bind and activate SMAD transcriptional regulators. Receptor for activin A, activin B and inhibin A. Mediates induction of adipogenesis by GDF6. This chain is Activin receptor type-2A, found in Rattus norvegicus (Rat).